The primary structure comprises 286 residues: Homoserine kinase (286 aa).

78–88 contacts ATP; that stretch reads PVAHGLGSSSS.

It belongs to the GHMP kinase family. Homoserine kinase subfamily.

The protein localises to the cytoplasm. The enzyme catalyses L-homoserine + ATP = O-phospho-L-homoserine + ADP + H(+). It functions in the pathway amino-acid biosynthesis; L-threonine biosynthesis; L-threonine from L-aspartate: step 4/5. Functionally, catalyzes the ATP-dependent phosphorylation of L-homoserine to L-homoserine phosphate. The protein is Homoserine kinase of Limosilactobacillus fermentum (strain NBRC 3956 / LMG 18251) (Lactobacillus fermentum).